The sequence spans 351 residues: Glycerol-3-phosphate dehydrogenase [NAD(P)+] (351 aa).

Ser-18, Trp-19, Arg-38, and Lys-122 together coordinate NADPH. Residues Lys-122, Gly-153, and Ser-155 each coordinate sn-glycerol 3-phosphate. Ala-157 contacts NADPH. Sn-glycerol 3-phosphate-binding residues include Lys-208, Asp-261, Ser-271, Arg-272, and Asn-273. The active-site Proton acceptor is Lys-208. Position 272 (Arg-272) interacts with NADPH. Residue Glu-297 coordinates NADPH.

This sequence belongs to the NAD-dependent glycerol-3-phosphate dehydrogenase family.

The protein resides in the cytoplasm. It catalyses the reaction sn-glycerol 3-phosphate + NAD(+) = dihydroxyacetone phosphate + NADH + H(+). The enzyme catalyses sn-glycerol 3-phosphate + NADP(+) = dihydroxyacetone phosphate + NADPH + H(+). It participates in membrane lipid metabolism; glycerophospholipid metabolism. Catalyzes the reduction of the glycolytic intermediate dihydroxyacetone phosphate (DHAP) to sn-glycerol 3-phosphate (G3P), the key precursor for phospholipid synthesis. The protein is Glycerol-3-phosphate dehydrogenase [NAD(P)+] of Bordetella pertussis (strain Tohama I / ATCC BAA-589 / NCTC 13251).